The sequence spans 1997 residues: Chromatin-remodeling ATPase INO80 (1997 aa).

Disordered regions lie at residues 1–378, 397–579, and 674–858; these read MDHF…AAPS, IAAP…AENE, and ERKK…EKVV. The span at 12–25 shows a compositional bias: basic and acidic residues; the sequence is PHFDEDGTEGRGDR. Residues 32–41 are compositionally biased toward pro residues; that stretch reads GPAPPPPPPR. Positions 49–64 are enriched in low complexity; the sequence is NPVSSNSAVQSQAAAA. The segment covering 89–107 has biased composition (polar residues); sequence STNSMRATPHSSSSFNLRS. Residues 108-117 are compositionally biased toward basic and acidic residues; it reads PTREPSEYRH. 3 stretches are compositionally biased toward low complexity: residues 118 to 156, 203 to 230, and 240 to 251; these read PLSS…SLSS, SLQA…PLSA, and SSSSQPPARASQ. Residues 264-276 are compositionally biased toward basic and acidic residues; it reads SFRDRDSSVREKS. A compositionally biased stretch (polar residues) spans 288–297; it reads EASNGISGSS. Basic and acidic residues predominate over residues 298-317; that stretch reads PRKDRDRDRDHRGTTRESQR. Composition is skewed to polar residues over residues 318–340 and 366–378; these read RSVS…SASN and VDNT…AAPS. The segment covering 411-420 has biased composition (low complexity); that stretch reads SPRLSLRPPS. 3 stretches are compositionally biased toward polar residues: residues 433 to 442, 451 to 465, and 472 to 481; these read NPTNGTTSTA, SPPS…TNPS, and SFSNILSSSE. Composition is skewed to basic and acidic residues over residues 500-519 and 529-540; these read VPMK…EKKE and RISDIRHSESTP. Residues 666–735 are a coiled coil; the sequence is ERELFAEKER…VQQTRLILQK (70 aa). Positions 689–707 are enriched in low complexity; the sequence is MATTMEAKAAALARASAAQ. Over residues 709–723 the composition is skewed to basic and acidic residues; the sequence is EAERQKYMREAERAN. Residues 769–781 are compositionally biased toward basic residues; the sequence is TKGKGRAGARPKK. The segment covering 782-793 has biased composition (basic and acidic residues); the sequence is SKEQKQAEKDAA. Residues 794 to 806 are compositionally biased toward low complexity; sequence EAAQAALDAGLEL. Residues 824–858 show a composition bias toward basic and acidic residues; the sequence is APKEADVDKDKENKEPQEPKEPKEPKEKVIKEKVV. Residues 881-1006 form the DBINO domain; that stretch reads IWRDLARKDV…SHFIGKKIKT (126 aa). Residues 1130 to 1302 enclose the Helicase ATP-binding domain; the sequence is VNLYEQGING…WALLHFIMPS (173 aa). An ATP-binding site is contributed by 1143 to 1150; it reads DEMGLGKT. A DEAQ box motif is present at residues 1253–1256; it reads DEAQ. Residues 1702 to 1858 enclose the Helicase C-terminal domain; that stretch reads KLDELLRELK…GSSAAGGGVD (157 aa). Basic and acidic residues predominate over residues 1891–1902; the sequence is ELLESGELDKMQ. Residues 1891 to 1986 form a disordered region; that stretch reads ELLESGELDK…GSKKAKTTKQ (96 aa). Positions 1903–1914 are enriched in basic residues; sequence KKSRGGNKRKRG. Positions 1919 to 1933 are enriched in basic and acidic residues; the sequence is EGKEVSLDEMYHEGE. Positions 1954–1967 are enriched in gly residues; it reads AAGGEGGDGKGAVG. Basic residues predominate over residues 1970 to 1985; the sequence is AKKRKTGGSKKAKTTK.

Belongs to the SNF2/RAD54 helicase family. In terms of assembly, component of the INO80 chromatin-remodeling complex.

It is found in the nucleus. It carries out the reaction ATP + H2O = ADP + phosphate + H(+). In terms of biological role, ATPase component of the INO80 complex which remodels chromatin by shifting nucleosomes and is involved in DNA repair. The polypeptide is Chromatin-remodeling ATPase INO80 (crf2-1) (Neurospora crassa (strain ATCC 24698 / 74-OR23-1A / CBS 708.71 / DSM 1257 / FGSC 987)).